The sequence spans 33 residues: U1-pseudomyrmecitoxin-Pt1 subunit LS2 (33 aa).

It belongs to the myrmexin family. Heterodimer composed of subunit LS2 and subunit SS1, heterodimer composed of subunit LS2 and SS2, and heterodimer composed of subunit LS2 and SS3; disulfide-linked. Expressed by the venom gland.

It localises to the secreted. In terms of biological role, this heterodimer may have anti-inflammatory properties, since the myrmexin complex (composed of 6 SS-LS heterodimers) inhibits carrageenin-induced edema in a dose-dependent manner (after subcutaneous injection into rats). This is U1-pseudomyrmecitoxin-Pt1 subunit LS2 from Pseudomyrmex triplarinus (Ant).